The chain runs to 207 residues: Frataxin, mitochondrial (207 aa).

The transit peptide at 1–40 (MWAFGGRAAVGLLPRTASRASAWVGNPRWREPIVTCGRRG) directs the protein to the mitochondrion.

The protein belongs to the frataxin family. As to quaternary structure, component of the mitochondrial core iron-sulfur cluster (ISC) complex composed of NFS1, LYRM4, NDUFAB1, ISCU, FXN, and FDX2; this complex is a heterohexamer containing two copies of each monomer. Homodimer. Monomer (probable predominant form). Oligomer. Monomers and polymeric aggregates of &gt;1 MDa have been isolated from mitochondria. A small fraction of heterologous overexpressed recombinant frataxin forms high-molecular weight aggregates that incorporate iron. Interacts with LYRM4. Interacts (via ferrous form) with ISCU; the interaction is possible when both are bound to the dimeric form of the cysteine desulfurase complex (NFS1:LYRM4) and the interaction enhances FXN interaction to the dimeric form of the cysteine desulfurase complex (NFS1:LYRM4). Interacts with FECH; one iron-bound FXN monomer seems to interact with a FECH homodimer. Interacts with SDHA and SDHB. Interacts with ACO2; the interaction is dependent on citrate. Interacts with HSPA9. Component of a complex composed of FXN, NFS1, LYRM4 and ISCU. Interacts with ACO1. Interacts with ISCU (cytoplasmic form). Post-translationally, processed in two steps by mitochondrial processing peptidase (MPP). MPP first cleaves the precursor to intermediate form and subsequently converts the intermediate to yield frataxin mature form (frataxin(81-210)) which is the predominant form. The additional forms, frataxin(56-210) and frataxin(78-210), seem to be produced when the normal maturation process is impaired; their physiological relevance is unsure. In terms of tissue distribution, heart, liver, skeletal muscle, kidney, spleen and thymus. Weakly expressed in the brain and lung.

It is found in the mitochondrion. Its subcellular location is the cytoplasm. It localises to the cytosol. The catalysed reaction is 4 Fe(2+) + O2 + 4 H(+) = 4 Fe(3+) + 2 H2O. Functionally, functions as an activator of persulfide transfer to the scaffoding protein ISCU as component of the core iron-sulfur cluster (ISC) assembly complex and participates to the [2Fe-2S] cluster assembly. Accelerates sulfur transfer from NFS1 persulfide intermediate to ISCU and to small thiols such as L-cysteine and glutathione leading to persulfuration of these thiols and ultimately sulfide release. Binds ferrous ion and is released from FXN upon the addition of both L-cysteine and reduced FDX2 during [2Fe-2S] cluster assembly. The core iron-sulfur cluster (ISC) assembly complex is involved in the de novo synthesis of a [2Fe-2S] cluster, the first step of the mitochondrial iron-sulfur protein biogenesis. This process is initiated by the cysteine desulfurase complex (NFS1:LYRM4:NDUFAB1) that produces persulfide which is delivered on the scaffold protein ISCU in a FXN-dependent manner. Then this complex is stabilized by FDX2 which provides reducing equivalents to accomplish the [2Fe-2S] cluster assembly. Finally, the [2Fe-2S] cluster is transferred from ISCU to chaperone proteins, including HSCB, HSPA9 and GLRX5. May play a role in the protection against iron-catalyzed oxidative stress through its ability to catalyze the oxidation of Fe(2+) to Fe(3+); the oligomeric form but not the monomeric form has in vitro ferroxidase activity. May be able to store large amounts of iron in the form of a ferrihydrite mineral by oligomerization; however, the physiological relevance is unsure as reports are conflicting and the function has only been shown using heterologous overexpression systems. May function as an iron chaperone protein that protects the aconitase [4Fe-4S]2+ cluster from disassembly and promotes enzyme reactivation. May play a role as a high affinity iron binding partner for FECH that is capable of both delivering iron to ferrochelatase and mediating the terminal step in mitochondrial heme biosynthesis. Its function is as follows. Modulates the RNA-binding activity of ACO1. May be involved in the cytoplasmic iron-sulfur protein biogenesis. May contribute to oxidative stress resistance and overall cell survival. The sequence is that of Frataxin, mitochondrial from Mus musculus (Mouse).